A 103-amino-acid chain; its full sequence is Large ribosomal subunit protein uL23 (103 aa).

This sequence belongs to the universal ribosomal protein uL23 family. Part of the 50S ribosomal subunit. Contacts protein L29, and trigger factor when it is bound to the ribosome.

One of the early assembly proteins it binds 23S rRNA. One of the proteins that surrounds the polypeptide exit tunnel on the outside of the ribosome. Forms the main docking site for trigger factor binding to the ribosome. The sequence is that of Large ribosomal subunit protein uL23 from Zymomonas mobilis subsp. mobilis (strain ATCC 31821 / ZM4 / CP4).